The sequence spans 654 residues: tRNA 5-methylaminomethyl-2-thiouridine biosynthesis bifunctional protein MnmC (654 aa).

The segment at 1–236 is tRNA (mnm(5)s(2)U34)-methyltransferase; the sequence is MPTLLQHAQI…KWEVMSGAYV (236 aa). Positions 262 to 654 are FAD-dependent cmnm(5)s(2)U34 oxidoreductase; that stretch reads IGAGLAGSSS…FGLRRLIRGK (393 aa).

In the N-terminal section; belongs to the methyltransferase superfamily. tRNA (mnm(5)s(2)U34)-methyltransferase family. This sequence in the C-terminal section; belongs to the DAO family. It depends on FAD as a cofactor.

The protein resides in the cytoplasm. It catalyses the reaction 5-aminomethyl-2-thiouridine(34) in tRNA + S-adenosyl-L-methionine = 5-methylaminomethyl-2-thiouridine(34) in tRNA + S-adenosyl-L-homocysteine + H(+). In terms of biological role, catalyzes the last two steps in the biosynthesis of 5-methylaminomethyl-2-thiouridine (mnm(5)s(2)U) at the wobble position (U34) in tRNA. Catalyzes the FAD-dependent demodification of cmnm(5)s(2)U34 to nm(5)s(2)U34, followed by the transfer of a methyl group from S-adenosyl-L-methionine to nm(5)s(2)U34, to form mnm(5)s(2)U34. This is tRNA 5-methylaminomethyl-2-thiouridine biosynthesis bifunctional protein MnmC from Pseudomonas putida (strain ATCC 700007 / DSM 6899 / JCM 31910 / BCRC 17059 / LMG 24140 / F1).